Here is a 122-residue protein sequence, read N- to C-terminus: Large ribosomal subunit protein uL14 (122 aa).

Belongs to the universal ribosomal protein uL14 family. In terms of assembly, part of the 50S ribosomal subunit. Forms a cluster with proteins L3 and L19. In the 70S ribosome, L14 and L19 interact and together make contacts with the 16S rRNA in bridges B5 and B8.

In terms of biological role, binds to 23S rRNA. Forms part of two intersubunit bridges in the 70S ribosome. This chain is Large ribosomal subunit protein uL14, found in Buchnera aphidicola subsp. Acyrthosiphon pisum (strain 5A).